Here is a 251-residue protein sequence, read N- to C-terminus: Imidazole glycerol phosphate synthase subunit HisF (251 aa).

Residues Asp-11 and Asp-130 contribute to the active site.

Belongs to the HisA/HisF family. As to quaternary structure, heterodimer of HisH and HisF.

Its subcellular location is the cytoplasm. It carries out the reaction 5-[(5-phospho-1-deoxy-D-ribulos-1-ylimino)methylamino]-1-(5-phospho-beta-D-ribosyl)imidazole-4-carboxamide + L-glutamine = D-erythro-1-(imidazol-4-yl)glycerol 3-phosphate + 5-amino-1-(5-phospho-beta-D-ribosyl)imidazole-4-carboxamide + L-glutamate + H(+). It functions in the pathway amino-acid biosynthesis; L-histidine biosynthesis; L-histidine from 5-phospho-alpha-D-ribose 1-diphosphate: step 5/9. Functionally, IGPS catalyzes the conversion of PRFAR and glutamine to IGP, AICAR and glutamate. The HisF subunit catalyzes the cyclization activity that produces IGP and AICAR from PRFAR using the ammonia provided by the HisH subunit. In Streptococcus mutans serotype c (strain ATCC 700610 / UA159), this protein is Imidazole glycerol phosphate synthase subunit HisF.